The following is a 329-amino-acid chain: Ig gamma-2 chain C region (329 aa).

3 disulfide bridges follow: cysteine 28–cysteine 79, cysteine 142–cysteine 202, and cysteine 248–cysteine 308. N-linked (GlcNAc...) asparagine glycosylation occurs at asparagine 178.

It is found in the secreted. This Cavia porcellus (Guinea pig) protein is Ig gamma-2 chain C region.